The primary structure comprises 261 residues: Carnitinyl-CoA dehydratase (261 aa).

The active-site Nucleophile is the glutamate 111. Residue glutamate 131 is the Proton acceptor of the active site.

It belongs to the enoyl-CoA hydratase/isomerase family.

The catalysed reaction is (R)-carnitinyl-CoA = crotonobetainyl-CoA + H2O. It participates in amine and polyamine metabolism; carnitine metabolism. In terms of biological role, catalyzes the reversible dehydration of L-carnitinyl-CoA to crotonobetainyl-CoA. This chain is Carnitinyl-CoA dehydratase, found in Salmonella typhi.